The chain runs to 208 residues: Large ribosomal subunit protein uL4 (208 aa).

Positions 50-83 (VKTRAEVSGGGRKPWKQKGTGRARQGSIRAPQWK) are disordered.

Belongs to the universal ribosomal protein uL4 family. As to quaternary structure, part of the 50S ribosomal subunit.

In terms of biological role, one of the primary rRNA binding proteins, this protein initially binds near the 5'-end of the 23S rRNA. It is important during the early stages of 50S assembly. It makes multiple contacts with different domains of the 23S rRNA in the assembled 50S subunit and ribosome. Forms part of the polypeptide exit tunnel. The sequence is that of Large ribosomal subunit protein uL4 from Mycoplasma capricolum subsp. capricolum (strain California kid / ATCC 27343 / NCTC 10154).